The chain runs to 306 residues: Acetyl-coenzyme A carboxylase carboxyl transferase subunit beta (306 aa).

The CoA carboxyltransferase N-terminal domain occupies 25-294; that stretch reads VWTKCDSCGQ…PQDPLPHEPR (270 aa). Residues Cys-29, Cys-32, Cys-48, and Cys-51 each contribute to the Zn(2+) site. The C4-type zinc-finger motif lies at 29–51; it reads CDSCGQVLYRAELERNLEVCPKC. The tract at residues 281 to 306 is disordered; the sequence is NRPQPQDPLPHEPRPDAVPEDHQDEV. Positions 289-306 are enriched in basic and acidic residues; sequence LPHEPRPDAVPEDHQDEV.

The protein belongs to the AccD/PCCB family. As to quaternary structure, acetyl-CoA carboxylase is a heterohexamer composed of biotin carboxyl carrier protein (AccB), biotin carboxylase (AccC) and two subunits each of ACCase subunit alpha (AccA) and ACCase subunit beta (AccD). The cofactor is Zn(2+).

The protein localises to the cytoplasm. The enzyme catalyses N(6)-carboxybiotinyl-L-lysyl-[protein] + acetyl-CoA = N(6)-biotinyl-L-lysyl-[protein] + malonyl-CoA. Its pathway is lipid metabolism; malonyl-CoA biosynthesis; malonyl-CoA from acetyl-CoA: step 1/1. Functionally, component of the acetyl coenzyme A carboxylase (ACC) complex. Biotin carboxylase (BC) catalyzes the carboxylation of biotin on its carrier protein (BCCP) and then the CO(2) group is transferred by the transcarboxylase to acetyl-CoA to form malonyl-CoA. The sequence is that of Acetyl-coenzyme A carboxylase carboxyl transferase subunit beta from Sodalis glossinidius (strain morsitans).